A 944-amino-acid polypeptide reads, in one-letter code: UvrABC system protein A (944 aa).

31–38 (GLSGSGKS) lines the ATP pocket. The segment at 253 to 280 (CPVCGHAISELEPKLFSFNNPAGACPTC) adopts a C4-type zinc-finger fold. ABC transporter domains lie at 309–586 (WDRR…PDSL) and 606–936 (RNKK…HYLK). ATP is bound at residue 639–646 (GVSGSGKS). The C4-type zinc finger occupies 739 to 765 (CEACQGDGLIKVEMHFLPDIYVPCDVC).

The protein belongs to the ABC transporter superfamily. UvrA family. Forms a heterotetramer with UvrB during the search for lesions.

It is found in the cytoplasm. The UvrABC repair system catalyzes the recognition and processing of DNA lesions. UvrA is an ATPase and a DNA-binding protein. A damage recognition complex composed of 2 UvrA and 2 UvrB subunits scans DNA for abnormalities. When the presence of a lesion has been verified by UvrB, the UvrA molecules dissociate. This chain is UvrABC system protein A, found in Pseudomonas putida (strain ATCC 47054 / DSM 6125 / CFBP 8728 / NCIMB 11950 / KT2440).